We begin with the raw amino-acid sequence, 318 residues long: Protein RecA (318 aa).

Residue 53 to 60 (GPESSGKT) coordinates ATP.

It belongs to the RecA family.

The protein localises to the cytoplasm. Can catalyze the hydrolysis of ATP in the presence of single-stranded DNA, the ATP-dependent uptake of single-stranded DNA by duplex DNA, and the ATP-dependent hybridization of homologous single-stranded DNAs. It interacts with LexA causing its activation and leading to its autocatalytic cleavage. The polypeptide is Protein RecA (Bacteroides fragilis (strain YCH46)).